Here is a 215-residue protein sequence, read N- to C-terminus: UPF0502 protein PSEEN2299 (215 aa).

It belongs to the UPF0502 family.

This chain is UPF0502 protein PSEEN2299, found in Pseudomonas entomophila (strain L48).